The sequence spans 47 residues: Photosystem II reaction center protein K (47 aa).

A propeptide spanning residues M1–A10 is cleaved from the precursor. Residues F19–V39 form a helical membrane-spanning segment.

The protein belongs to the PsbK family. PSII is composed of 1 copy each of membrane proteins PsbA, PsbB, PsbC, PsbD, PsbE, PsbF, PsbH, PsbI, PsbJ, PsbK, PsbL, PsbM, PsbT, PsbX, PsbY, PsbZ, Psb30/Ycf12, peripheral proteins PsbO, CyanoQ (PsbQ), PsbU, PsbV and a large number of cofactors. It forms dimeric complexes.

The protein resides in the cellular thylakoid membrane. In terms of biological role, one of the components of the core complex of photosystem II (PSII). PSII is a light-driven water:plastoquinone oxidoreductase that uses light energy to abstract electrons from H(2)O, generating O(2) and a proton gradient subsequently used for ATP formation. It consists of a core antenna complex that captures photons, and an electron transfer chain that converts photonic excitation into a charge separation. This is Photosystem II reaction center protein K from Synechococcus sp. (strain CC9311).